Consider the following 287-residue polypeptide: 3-methyl-2-oxobutanoate hydroxymethyltransferase (287 aa).

Mg(2+) contacts are provided by Asp-57 and Asp-96. 3-methyl-2-oxobutanoate contacts are provided by residues 57-58 (DS), Asp-96, and Lys-125. Glu-127 serves as a coordination point for Mg(2+). Glu-194 functions as the Proton acceptor in the catalytic mechanism.

This sequence belongs to the PanB family. As to quaternary structure, homodecamer; pentamer of dimers. It depends on Mg(2+) as a cofactor.

The protein localises to the cytoplasm. It catalyses the reaction 3-methyl-2-oxobutanoate + (6R)-5,10-methylene-5,6,7,8-tetrahydrofolate + H2O = 2-dehydropantoate + (6S)-5,6,7,8-tetrahydrofolate. Its pathway is cofactor biosynthesis; (R)-pantothenate biosynthesis; (R)-pantoate from 3-methyl-2-oxobutanoate: step 1/2. Catalyzes the reversible reaction in which hydroxymethyl group from 5,10-methylenetetrahydrofolate is transferred onto alpha-ketoisovalerate to form ketopantoate. This Methylobacterium sp. (strain 4-46) protein is 3-methyl-2-oxobutanoate hydroxymethyltransferase.